A 184-amino-acid polypeptide reads, in one-letter code: Adenine phosphoribosyltransferase (184 aa).

It belongs to the purine/pyrimidine phosphoribosyltransferase family. As to quaternary structure, homodimer.

The protein localises to the cytoplasm. It catalyses the reaction AMP + diphosphate = 5-phospho-alpha-D-ribose 1-diphosphate + adenine. Its pathway is purine metabolism; AMP biosynthesis via salvage pathway; AMP from adenine: step 1/1. Functionally, catalyzes a salvage reaction resulting in the formation of AMP, that is energically less costly than de novo synthesis. This chain is Adenine phosphoribosyltransferase, found in Parafrankia sp. (strain EAN1pec).